The primary structure comprises 133 residues: Putative actin-depolymerizing factor 11 (133 aa).

The 133-residue stretch at 1-133 (MVLHDDCKLT…SLDAIRRRIN (133 aa)) folds into the ADF-H domain.

It belongs to the actin-binding proteins ADF family.

The protein localises to the cytoplasm. Its subcellular location is the cytoskeleton. In terms of biological role, actin-depolymerizing protein. Severs actin filaments (F-actin) and binds to actin monomers. The sequence is that of Putative actin-depolymerizing factor 11 (ADF11) from Arabidopsis thaliana (Mouse-ear cress).